The following is a 155-amino-acid chain: Putative pre-16S rRNA nuclease (155 aa).

It belongs to the YqgF nuclease family.

The protein resides in the cytoplasm. Could be a nuclease involved in processing of the 5'-end of pre-16S rRNA. The polypeptide is Putative pre-16S rRNA nuclease (Xanthomonas axonopodis pv. citri (strain 306)).